The primary structure comprises 565 residues: Arginine--tRNA ligase (565 aa).

Positions 128-138 (ANPTGPLHVGH) match the 'HIGH' region motif.

The protein belongs to the class-I aminoacyl-tRNA synthetase family. In terms of assembly, monomer.

Its subcellular location is the cytoplasm. It carries out the reaction tRNA(Arg) + L-arginine + ATP = L-arginyl-tRNA(Arg) + AMP + diphosphate. The chain is Arginine--tRNA ligase from Delftia acidovorans (strain DSM 14801 / SPH-1).